An 878-amino-acid chain; its full sequence is Leucine--tRNA ligase (878 aa).

A 'HIGH' region motif is present at residues 43 to 53; the sequence is PYPSGRIHIGH. Positions 630–634 match the 'KMSKS' region motif; it reads KMSKS. Residue K633 coordinates ATP.

It belongs to the class-I aminoacyl-tRNA synthetase family.

The protein resides in the cytoplasm. It catalyses the reaction tRNA(Leu) + L-leucine + ATP = L-leucyl-tRNA(Leu) + AMP + diphosphate. The sequence is that of Leucine--tRNA ligase from Nitrobacter hamburgensis (strain DSM 10229 / NCIMB 13809 / X14).